Reading from the N-terminus, the 461-residue chain is Nuclear distribution protein PAC1 (461 aa).

The stretch at 64–93 (NSIIRLHRKILDLEQKCQQLTEELEAVPTE) forms a coiled coil. 7 WD repeats span residues 118 to 157 (DVGA…MPLH), 161 to 203 (AHMK…AFQL), 209 to 252 (SHEH…KSFQ), 254 to 292 (HNQW…SMAV), 318 to 362 (DDQV…FIPH), 382 to 421 (GHTS…KVWP), and 423 to 461 (ASHG…VFMR).

It belongs to the WD repeat LIS1/nudF family. As to quaternary structure, self-associates. Interacts with NDL1 and dynein.

It is found in the cytoplasm. The protein localises to the cytoskeleton. The protein resides in the spindle pole. Positively regulates the activity of the minus-end directed microtubule motor protein dynein. Plays a central role in positioning the mitotic spindle at the bud neck during cell division. Targets cytoplasmic dynein to microtubule plus ends, thereby promoting dynein-mediated microtubule sliding along the bud cortex and consequently the movement of the mitotic spindle to the bud neck. This chain is Nuclear distribution protein PAC1, found in Eremothecium gossypii (strain ATCC 10895 / CBS 109.51 / FGSC 9923 / NRRL Y-1056) (Yeast).